We begin with the raw amino-acid sequence, 248 residues long: Pyridoxine 5'-phosphate synthase (248 aa).

Residue asparagine 12 coordinates 3-amino-2-oxopropyl phosphate. 14–15 (DH) contacts 1-deoxy-D-xylulose 5-phosphate. Arginine 23 is a binding site for 3-amino-2-oxopropyl phosphate. Histidine 48 functions as the Proton acceptor in the catalytic mechanism. Residues arginine 50 and histidine 55 each coordinate 1-deoxy-D-xylulose 5-phosphate. The active-site Proton acceptor is glutamate 75. Threonine 105 lines the 1-deoxy-D-xylulose 5-phosphate pocket. The Proton donor role is filled by histidine 196. 3-amino-2-oxopropyl phosphate-binding positions include glycine 197 and 218 to 219 (GH).

This sequence belongs to the PNP synthase family. As to quaternary structure, homooctamer; tetramer of dimers.

The protein localises to the cytoplasm. It catalyses the reaction 3-amino-2-oxopropyl phosphate + 1-deoxy-D-xylulose 5-phosphate = pyridoxine 5'-phosphate + phosphate + 2 H2O + H(+). It participates in cofactor biosynthesis; pyridoxine 5'-phosphate biosynthesis; pyridoxine 5'-phosphate from D-erythrose 4-phosphate: step 5/5. Functionally, catalyzes the complicated ring closure reaction between the two acyclic compounds 1-deoxy-D-xylulose-5-phosphate (DXP) and 3-amino-2-oxopropyl phosphate (1-amino-acetone-3-phosphate or AAP) to form pyridoxine 5'-phosphate (PNP) and inorganic phosphate. This is Pyridoxine 5'-phosphate synthase from Pseudomonas aeruginosa (strain LESB58).